The primary structure comprises 529 residues: Bifunctional purine biosynthesis protein PurH (529 aa).

The region spanning 1 to 148 is the MGS-like domain; sequence MQQRRPVRRA…KNHKDVAIVV (148 aa). Lys-287 is subject to N6-acetyllysine.

Belongs to the PurH family.

The enzyme catalyses (6R)-10-formyltetrahydrofolate + 5-amino-1-(5-phospho-beta-D-ribosyl)imidazole-4-carboxamide = 5-formamido-1-(5-phospho-D-ribosyl)imidazole-4-carboxamide + (6S)-5,6,7,8-tetrahydrofolate. The catalysed reaction is IMP + H2O = 5-formamido-1-(5-phospho-D-ribosyl)imidazole-4-carboxamide. Its pathway is purine metabolism; IMP biosynthesis via de novo pathway; 5-formamido-1-(5-phospho-D-ribosyl)imidazole-4-carboxamide from 5-amino-1-(5-phospho-D-ribosyl)imidazole-4-carboxamide (10-formyl THF route): step 1/1. The protein operates within purine metabolism; IMP biosynthesis via de novo pathway; IMP from 5-formamido-1-(5-phospho-D-ribosyl)imidazole-4-carboxamide: step 1/1. The protein is Bifunctional purine biosynthesis protein PurH of Escherichia coli O157:H7.